Here is a 301-residue protein sequence, read N- to C-terminus: Ornithine carbamoyltransferase (301 aa).

Residues Arg100 and His127–Gln130 contribute to the carbamoyl phosphate site. L-ornithine contacts are provided by residues Asn158, Asp221, and Ser225–Met226. Carbamoyl phosphate contacts are provided by Cys260 and Arg288.

Belongs to the aspartate/ornithine carbamoyltransferase superfamily. OTCase family. As to quaternary structure, homododecamer.

The protein resides in the cytoplasm. It carries out the reaction carbamoyl phosphate + L-ornithine = L-citrulline + phosphate + H(+). It participates in amino-acid biosynthesis; L-arginine biosynthesis; L-arginine from L-ornithine and carbamoyl phosphate: step 1/3. Functionally, reversibly catalyzes the transfer of the carbamoyl group from carbamoyl phosphate (CP) to the N(epsilon) atom of ornithine (ORN) to produce L-citrulline. In Moritella profunda, this protein is Ornithine carbamoyltransferase (argF).